The primary structure comprises 312 residues: Methionyl-tRNA formyltransferase (312 aa).

A (6S)-5,6,7,8-tetrahydrofolate-binding site is contributed by 109–112 (SLLP).

It belongs to the Fmt family.

The enzyme catalyses L-methionyl-tRNA(fMet) + (6R)-10-formyltetrahydrofolate = N-formyl-L-methionyl-tRNA(fMet) + (6S)-5,6,7,8-tetrahydrofolate + H(+). Its function is as follows. Attaches a formyl group to the free amino group of methionyl-tRNA(fMet). The formyl group appears to play a dual role in the initiator identity of N-formylmethionyl-tRNA by promoting its recognition by IF2 and preventing the misappropriation of this tRNA by the elongation apparatus. The polypeptide is Methionyl-tRNA formyltransferase (Caulobacter sp. (strain K31)).